Here is a 350-residue protein sequence, read N- to C-terminus: MPGPAAGSRARVYAEVNSLRSREYWDYEAHVPSWGNQDDYQLVRKLGRGKYSEVFEAINITNNERVVVKILKPVKKKKIKREVKILENLRGGTNIIKLIDTVKDPVSKTPALVFEYINNTDFKQLYQILTDFDIRFYMYELLKALDYCHSKGIMHRDVKPHNVMIDHQQKKLRLIDWGLAEFYHPAQEYNVRVASRYFKGPELLVDYQMYDYSLDMWSLGCMLASMIFRKEPFFHGQDNYDQLVRIAKVLGTDELYGYLKKYHIDLDPHFNDILGQHSRKRWENFIHSENRHLVSPEALDLLDKLLRYDHQQRLTAKEAMEHPYFYPVVKEQSQPCAENTVLSSGLTAAR.

Position 13 is a phosphotyrosine (Y13). S18 and S21 each carry phosphoserine. A Protein kinase domain is found at 40–325 (YQLVRKLGRG…AKEAMEHPYF (286 aa)). ATP is bound by residues 46 to 54 (LGRGKYSEV) and K69. K97 bears the N6-acetyllysine mark. The active-site Proton acceptor is the D157. Residue S288 is modified to Phosphoserine.

It belongs to the protein kinase superfamily. Ser/Thr protein kinase family. CK2 subfamily. In terms of assembly, heterotetramer composed of two catalytic subunits (alpha chain and/or alpha' chain) and two regulatory subunits (beta chains). The tetramer can exist as a combination of 2 alpha/2 beta, 2 alpha'/2 beta or 1 alpha/1 alpha'/2 beta subunits. Also part of a CK2-SPT16-SSRP1 complex composed of SSRP1, SUPT16H, CSNK2A1, CSNK2A2 and CSNK2B, which forms following UV irradiation. Interacts with RNPS1. Interacts with CSNK2A2IP (via C-terminus). Interacts with SIRT6; preventing CSNK2A2 localization to the nucleus. Interacts with HIRIP3. In terms of tissue distribution, highly expressed in brain, testis and mature epididymal spermatozoa. Weakly expressed in kidney, liver, lung, spleen and thymus (at protein level).

It localises to the nucleus. The protein resides in the cytoplasm. The enzyme catalyses L-seryl-[protein] + ATP = O-phospho-L-seryl-[protein] + ADP + H(+). The catalysed reaction is L-threonyl-[protein] + ATP = O-phospho-L-threonyl-[protein] + ADP + H(+). Its activity is regulated as follows. Constitutively active protein kinase whose activity is not directly affected by phosphorylation. Seems to be regulated by level of expression and localization. Catalytic subunit of a constitutively active serine/threonine-protein kinase complex that phosphorylates a large number of substrates containing acidic residues C-terminal to the phosphorylated serine or threonine. Regulates numerous cellular processes, such as cell cycle progression, apoptosis and transcription, as well as viral infection. May act as a regulatory node which integrates and coordinates numerous signals leading to an appropriate cellular response. During mitosis, functions as a component of the p53/TP53-dependent spindle assembly checkpoint (SAC) that maintains cyclin-B-CDK1 activity and G2 arrest in response to spindle damage. Also required for p53/TP53-mediated apoptosis, phosphorylating 'Ser-392' of p53/TP53 following UV irradiation. Phosphorylates a number of DNA repair proteins in response to DNA damage, such as MDC1, RAD9A, RAD51 and HTATSF1, promoting their recruitment to DNA damage sites. Can also negatively regulate apoptosis. Phosphorylates the caspases CASP9 and CASP2 and the apoptotic regulator NOL3. Phosphorylation protects CASP9 from cleavage and activation by CASP8, and inhibits the dimerization of CASP2 and activation of CASP8. Regulates transcription by direct phosphorylation of RNA polymerases I, II, III and IV. Also phosphorylates and regulates numerous transcription factors including NF-kappa-B, STAT1, CREB1, IRF1, IRF2, ATF1, SRF, MAX, JUN, FOS, MYC and MYB. Phosphorylates Hsp90 and its co-chaperones FKBP4 and CDC37, which is essential for chaperone function. Regulates Wnt signaling by phosphorylating CTNNB1 and the transcription factor LEF1. Acts as an ectokinase that phosphorylates several extracellular proteins. May phosphorylate histone H2A on 'Ser-1'. This chain is Casein kinase II subunit alpha' (Csnk2a2), found in Mus musculus (Mouse).